The chain runs to 155 residues: Ribonuclease H (155 aa).

The region spanning 1–142 is the RNase H type-1 domain; the sequence is MLKQVEIFTD…CDELARAAAS (142 aa). Mg(2+)-binding residues include Asp-10, Glu-48, Asp-70, and Asp-134.

The protein belongs to the RNase H family. In terms of assembly, monomer. Requires Mg(2+) as cofactor.

It is found in the cytoplasm. The enzyme catalyses Endonucleolytic cleavage to 5'-phosphomonoester.. Endonuclease that specifically degrades the RNA of RNA-DNA hybrids. The sequence is that of Ribonuclease H from Klebsiella pneumoniae subsp. pneumoniae (strain ATCC 700721 / MGH 78578).